Reading from the N-terminus, the 277-residue chain is Large ribosomal subunit protein uL2 (277 aa).

Residues 199 to 277 form a disordered region; the sequence is DHMNTSIGKA…ILLSRHKRKK (79 aa). The segment covering 209–220 has biased composition (basic residues); the sequence is GRNRWLGRKPHN.

This sequence belongs to the universal ribosomal protein uL2 family. Part of the 50S ribosomal subunit. Forms a bridge to the 30S subunit in the 70S ribosome.

One of the primary rRNA binding proteins. Required for association of the 30S and 50S subunits to form the 70S ribosome, for tRNA binding and peptide bond formation. It has been suggested to have peptidyltransferase activity; this is somewhat controversial. Makes several contacts with the 16S rRNA in the 70S ribosome. This chain is Large ribosomal subunit protein uL2, found in Bradyrhizobium diazoefficiens (strain JCM 10833 / BCRC 13528 / IAM 13628 / NBRC 14792 / USDA 110).